A 292-amino-acid polypeptide reads, in one-letter code: Shikimate dehydrogenase (NADP(+)) (292 aa).

Residues 22 to 24 and serine 69 each bind shikimate; that span reads SLS. Residue lysine 73 is the Proton acceptor of the active site. 2 residues coordinate shikimate: asparagine 94 and aspartate 111. NADP(+)-binding positions include 135 to 139 and isoleucine 236; that span reads GVGGA. Tyrosine 238 provides a ligand contact to shikimate. NADP(+) is bound at residue glycine 260.

The protein belongs to the shikimate dehydrogenase family. Homodimer.

It carries out the reaction shikimate + NADP(+) = 3-dehydroshikimate + NADPH + H(+). Its pathway is metabolic intermediate biosynthesis; chorismate biosynthesis; chorismate from D-erythrose 4-phosphate and phosphoenolpyruvate: step 4/7. Its function is as follows. Involved in the biosynthesis of the chorismate, which leads to the biosynthesis of aromatic amino acids. Catalyzes the reversible NADPH linked reduction of 3-dehydroshikimate (DHSA) to yield shikimate (SA). This chain is Shikimate dehydrogenase (NADP(+)), found in Streptococcus pyogenes serotype M18 (strain MGAS8232).